We begin with the raw amino-acid sequence, 321 residues long: Hex-5-enoyl-[acyl-carrier protein] acetylenase (321 aa).

2 helical membrane-spanning segments follow: residues 36–56 and 62–82; these read FLLY…LLWW and VEIG…SVGL. The short motif at 83 to 88 is the Histidine box-1 element; that stretch reads HRYFAH. Residues 99 to 119 traverse the membrane as a helical segment; that stretch reads VILAILGCMGAQGPVVSWVAV. The Histidine box-2 signature appears at 120–124; the sequence is HRRHH. A helical transmembrane segment spans residues 188–208; the sequence is YVVWIVLGLLIPTILGGIIHG. The Histidine box-3 motif lies at 269–273; that stretch reads QNNHH.

It belongs to the fatty acid desaturase type 2 family. Fe(2+) is required as a cofactor.

The protein resides in the membrane. It catalyses the reaction 5-hexenoyl-[ACP] + 2 reduced [2Fe-2S]-[ferredoxin] + O2 + 2 H(+) = 5-hexynoyl-[ACP] + 2 oxidized [2Fe-2S]-[ferredoxin] + 2 H2O. The catalysed reaction is hexanoyl-[ACP] + 2 reduced [2Fe-2S]-[ferredoxin] + O2 + 2 H(+) = 5-hexenoyl-[ACP] + 2 oxidized [2Fe-2S]-[ferredoxin] + 2 H2O. Functionally, desaturase involved in the biosynthesis of jamaicamides, which show sodium channel blocking activity and fish toxicity. Catalyzes the conversion of 5-hexenoyl loaded onto the acyl carrier protein JamC (5-hexenoyl-JamC) to 5-hexynoyl-JamC. Can also catalyze the conversion of hexanoyl-JamC to 5-hexenoyl-JamC, but it cannot use free 5-hexenoic acid, 5-hexenoyl-CoA, 2-hexenoyl-JamC, 3-hexenoyl-JamC or 4-hexenoyl-JamC. Is specific for C(6) chains, and cannot use 4-pentenoyl-JamC, 6-heptenoyl-JamC or 7-octenoyl-JamC as substrate. This chain is Hex-5-enoyl-[acyl-carrier protein] acetylenase, found in Moorena producens (strain JHB).